A 134-amino-acid chain; its full sequence is uncharacterized protein (134 aa).

It belongs to the orthopoxviruses B21 protein family.

This is an uncharacterized protein from Bos taurus (Bovine).